A 440-amino-acid chain; its full sequence is Ribosomal protein uS12 methylthiotransferase RimO (440 aa).

Residues 6 to 116 form the MTTase N-terminal domain; sequence PKVGFVSLGC…VVTAVHEVVP (111 aa). Residues Cys-15, Cys-51, Cys-80, Cys-149, Cys-153, and Cys-156 each coordinate [4Fe-4S] cluster. One can recognise a Radical SAM core domain in the interval 135–373; the sequence is LTPRHYAYLK…MAHQQAISAA (239 aa). The TRAM domain maps to 376-440; it reads QLKVGKEIEV…DEYDLWAEPV (65 aa).

Belongs to the methylthiotransferase family. RimO subfamily. [4Fe-4S] cluster serves as cofactor.

It is found in the cytoplasm. It carries out the reaction L-aspartate(89)-[ribosomal protein uS12]-hydrogen + (sulfur carrier)-SH + AH2 + 2 S-adenosyl-L-methionine = 3-methylsulfanyl-L-aspartate(89)-[ribosomal protein uS12]-hydrogen + (sulfur carrier)-H + 5'-deoxyadenosine + L-methionine + A + S-adenosyl-L-homocysteine + 2 H(+). Catalyzes the methylthiolation of an aspartic acid residue of ribosomal protein uS12. This chain is Ribosomal protein uS12 methylthiotransferase RimO, found in Pseudomonas paraeruginosa (strain DSM 24068 / PA7) (Pseudomonas aeruginosa (strain PA7)).